The following is a 119-amino-acid chain: NADH-quinone oxidoreductase subunit A (119 aa).

3 helical membrane passes run Y7–G27, L63–V83, and I88–A108.

This sequence belongs to the complex I subunit 3 family. In terms of assembly, NDH-1 is composed of 14 different subunits. Subunits NuoA, H, J, K, L, M, N constitute the membrane sector of the complex.

It is found in the cell inner membrane. It catalyses the reaction a quinone + NADH + 5 H(+)(in) = a quinol + NAD(+) + 4 H(+)(out). In terms of biological role, NDH-1 shuttles electrons from NADH, via FMN and iron-sulfur (Fe-S) centers, to quinones in the respiratory chain. The immediate electron acceptor for the enzyme in this species is believed to be ubiquinone. Couples the redox reaction to proton translocation (for every two electrons transferred, four hydrogen ions are translocated across the cytoplasmic membrane), and thus conserves the redox energy in a proton gradient. The polypeptide is NADH-quinone oxidoreductase subunit A (Burkholderia vietnamiensis (strain G4 / LMG 22486) (Burkholderia cepacia (strain R1808))).